The chain runs to 436 residues: Serine--tRNA ligase (436 aa).

239 to 241 (TAE) contributes to the L-serine binding site. ATP is bound at residue 270–272 (RLE). Glu293 is an L-serine binding site. Position 357–360 (357–360 (EISS)) interacts with ATP. Ser393 is a binding site for L-serine.

This sequence belongs to the class-II aminoacyl-tRNA synthetase family. Type-1 seryl-tRNA synthetase subfamily. Homodimer. The tRNA molecule binds across the dimer.

The protein localises to the cytoplasm. It carries out the reaction tRNA(Ser) + L-serine + ATP = L-seryl-tRNA(Ser) + AMP + diphosphate + H(+). It catalyses the reaction tRNA(Sec) + L-serine + ATP = L-seryl-tRNA(Sec) + AMP + diphosphate + H(+). The protein operates within aminoacyl-tRNA biosynthesis; selenocysteinyl-tRNA(Sec) biosynthesis; L-seryl-tRNA(Sec) from L-serine and tRNA(Sec): step 1/1. Functionally, catalyzes the attachment of serine to tRNA(Ser). Is also able to aminoacylate tRNA(Sec) with serine, to form the misacylated tRNA L-seryl-tRNA(Sec), which will be further converted into selenocysteinyl-tRNA(Sec). The protein is Serine--tRNA ligase of Blochmanniella floridana.